The chain runs to 270 residues: Type II restriction enzyme CeqI (270 aa).

It catalyses the reaction Endonucleolytic cleavage of DNA to give specific double-stranded fragments with terminal 5'-phosphates.. In terms of biological role, a P subtype restriction enzyme that recognizes the double-stranded sequence 5'-GATATC-3' and cleaves after T-3. This is Type II restriction enzyme CeqI (ceqIR) from Rhodococcus hoagii (Corynebacterium equii).